The primary structure comprises 732 residues: MSEQSRCPVTGRTADSPATGSGLSNRDWWPNQLHLDMLHQHSSLVNPMGEGFRYKEEFGKLDLKEVKKDLYALMTDSQEWWPADYGHYGGLFIRMAWHSAGTYRTSDGRGGGGTGNQRFAPLNSWPDNANLDKARRLLWPIKQKYGKKISWADLMILAGNCALESMGFKTFGFGGGRVDIWEPEEDIYWGKEVEWLGNKRYSGERDLENPLAAVQMGLIYVNPEGPDGKPDPVAAGRDIRETFARMAMNDEETVALVAGGHTFGKCHGVGDPKLVGPEPEAADIEEQGLGWKSGYGIGKGDETMTSGLEGAWTPDPIHWDMGYLGMLFRYEWELTKSPAGAWQWKPKDVAEEDLAPAAHDPSKRVPTMMTTADLAMRMDPIYGPISQRYYEHPDQFADAFARAWFKLTHRDMGPHSRYLGAEVPAEELIWQDPVPALDHDLIDAEEIAELKKRLLASGLSIPELVSTAWASASTFRGSDKRGGANGARIRLAPQKDWEVNQPEQLQRVLHKLEEIRNTFNGEQSGNKQVSLADMIVLGGCAAVEEAAGKAGTGVTVPFTPGRTDALQEQTDTESFSVLEPLADGFRNYMKKKYSVSAEEMLVDRSQLLTLTAPEMTVLLGGLRVLGANFQQSPHGVFTTQPETLTNDYFVNLLDMGTEWKPLSKEQDTFEGRDRKTGEPRWTATRVDLIFGSNSRLRAIAEVYGSDDAQEKFVHDFVAAWDKVMNLDRFDLG.

The interval 1–23 (MSEQSRCPVTGRTADSPATGSGL) is disordered. Residues 97–220 (WHSAGTYRTS…LAAVQMGLIY (124 aa)) constitute a cross-link (tryptophyl-tyrosyl-methioninium (Trp-Tyr) (with M-246)). The active-site Proton acceptor is histidine 98. A cross-link (tryptophyl-tyrosyl-methioninium (Tyr-Met) (with W-97)) is located at residues 220–246 (YVNPEGPDGKPDPVAAGRDIRETFARM). Histidine 261 is a binding site for heme b.

The protein belongs to the peroxidase family. Peroxidase/catalase subfamily. As to quaternary structure, homodimer or homotetramer. The cofactor is heme b. Formation of the three residue Trp-Tyr-Met cross-link is important for the catalase, but not the peroxidase activity of the enzyme.

The enzyme catalyses H2O2 + AH2 = A + 2 H2O. It catalyses the reaction 2 H2O2 = O2 + 2 H2O. Functionally, bifunctional enzyme with both catalase and broad-spectrum peroxidase activity. The protein is Catalase-peroxidase of Prosthecochloris aestuarii (strain DSM 271 / SK 413).